We begin with the raw amino-acid sequence, 413 residues long: Serine hydroxymethyltransferase (413 aa).

Residues Leu119 and 123 to 125 (GHL) contribute to the (6S)-5,6,7,8-tetrahydrofolate site. Lys228 carries the post-translational modification N6-(pyridoxal phosphate)lysine. 351 to 353 (SPF) is a (6S)-5,6,7,8-tetrahydrofolate binding site.

The protein belongs to the SHMT family. Homodimer. Requires pyridoxal 5'-phosphate as cofactor.

Its subcellular location is the cytoplasm. It catalyses the reaction (6R)-5,10-methylene-5,6,7,8-tetrahydrofolate + glycine + H2O = (6S)-5,6,7,8-tetrahydrofolate + L-serine. The protein operates within one-carbon metabolism; tetrahydrofolate interconversion. It functions in the pathway amino-acid biosynthesis; glycine biosynthesis; glycine from L-serine: step 1/1. Functionally, catalyzes the reversible interconversion of serine and glycine with tetrahydrofolate (THF) serving as the one-carbon carrier. This reaction serves as the major source of one-carbon groups required for the biosynthesis of purines, thymidylate, methionine, and other important biomolecules. Also exhibits THF-independent aldolase activity toward beta-hydroxyamino acids, producing glycine and aldehydes, via a retro-aldol mechanism. The sequence is that of Serine hydroxymethyltransferase from Lysinibacillus sphaericus (strain C3-41).